The sequence spans 77 residues: MKLTCVVIIAVLLLTACQLITADDSRGVQKHRSLRSTTKVSKSTSCMEAGSYCGSTTRICCGYCAYFGKKCIDYPSN.

The signal sequence occupies residues 1–22 (MKLTCVVIIAVLLLTACQLITA). Residues 23-50 (DDSRGVQKHRSLRSTTKVSKSTSCMEAG) constitute a propeptide that is removed on maturation. 3 cysteine pairs are disulfide-bonded: Cys-46–Cys-61, Cys-53–Cys-64, and Cys-60–Cys-71.

The protein belongs to the conotoxin O1 superfamily. As to expression, expressed by the venom duct.

It is found in the secreted. In terms of biological role, omega-conotoxins act at presynaptic membranes, they bind and block voltage-gated calcium channels (Cav). In Conus striatus (Striated cone), this protein is Omega-conotoxin-like 6.